The primary structure comprises 167 residues: C-X-C motif chemokine 15 (167 aa).

The N-terminal stretch at 1–25 (MAAQGWSMLLLAVLNLGIFVRPCDT) is a signal peptide. 2 cysteine pairs are disulfide-bonded: C30–C57 and C32–C73. S157 bears the Phosphoserine mark.

Belongs to the intercrine alpha (chemokine CxC) family. Expression restricted to the lung, produced by bronchoepithelial cells and is released into the airways. Expressed at low levels in fetal lung.

It is found in the secreted. Functionally, chemotactic for neutrophils. Involved in lung-specific neutrophil trafficking during normal and inflammatory conditions. This Mus musculus (Mouse) protein is C-X-C motif chemokine 15 (Cxcl15).